The following is a 1603-amino-acid chain: Vitellogenin-4 (1603 aa).

The N-terminal stretch at 1-15 is a signal peptide; sequence MKSIIIASLVALAIA. Residues 24-685 form the Vitellogenin domain; sequence FSPKSEYVYK…EKNAFLPKEV (662 aa). Asparagine 1266 carries an N-linked (GlcNAc...) asparagine glycan. One can recognise a VWFD domain in the interval 1306 to 1475; the sequence is ATCKVDQSEV…SYLLKNEECE (170 aa). 2 disulfides stabilise this stretch: cysteine 1308–cysteine 1438 and cysteine 1330–cysteine 1474.

As to expression, expressed in the intestine of adult hermaphrodites.

The protein resides in the secreted. Functionally, precursor of the egg-yolk proteins that are sources of nutrients during embryonic development. Together with other vitellogenins, may play a role in modulating life-span, acting via induction of autophagy and lysosomal lipolysis. The chain is Vitellogenin-4 (vit-4) from Caenorhabditis elegans.